The following is a 499-amino-acid chain: Alpha-L-arabinofuranosidase B (499 aa).

An N-terminal signal peptide occupies residues 1 to 17; it reads MFSRRNLLALGLAATVS. The tract at residues 18–335 is catalytic; that stretch reads AGPCDIYEAG…ENIVAAKYVV (318 aa). Intrachain disulfides connect C21-C31, C81-C86, and C176-C177. The N-linked (GlcNAc...) asparagine glycan is linked to N83. N202 is a glycosylation site (N-linked (GlcNAc...) asparagine). D219 contacts substrate. The Nucleophile role is filled by E221. Residues N222, N223, and G296 each coordinate substrate. D297 acts as the Proton donor in catalysis. Residues 336-499 form an ABD region; the sequence is GSLVSGPSFT…SFEIETAFAS (164 aa). C401 and C439 are oxidised to a cystine. H416, N418, F419, D435, H463, E465, L468, and D488 together coordinate substrate.

The protein belongs to the glycosyl hydrolase 54 family.

Its subcellular location is the secreted. It catalyses the reaction Hydrolysis of terminal non-reducing alpha-L-arabinofuranoside residues in alpha-L-arabinosides.. It participates in glycan metabolism; L-arabinan degradation. Its function is as follows. Alpha-L-arabinofuranosidase involved in the degradation of arabinoxylan, a major component of plant hemicellulose. Able to hydrolyze 1,5-, 1,3- and 1,2-alpha-linkages not only in L-arabinofuranosyl oligosaccharides, but also in polysaccharides containing terminal non-reducing L-arabinofuranoses in side chains, like L-arabinan, arabinogalactan and arabinoxylan. In Aspergillus kawachii (strain NBRC 4308) (White koji mold), this protein is Alpha-L-arabinofuranosidase B (abfB).